Reading from the N-terminus, the 456-residue chain is Anthocyanidin 3-O-glucosyltransferase UFGT (456 aa).

Ser-18 is a kaempferol binding site. Ser-18 contacts quercetin. A UDP-binding site is contributed by Thr-19. Thr-19 serves as a coordination point for UDP-alpha-D-glucose. 2 residues coordinate kaempferol: His-20 and Gln-84. The active-site Proton acceptor is the His-20. Gln-84 is a quercetin binding site. Catalysis depends on Asp-119, which acts as the Charge relay. Residue Thr-141 coordinates UDP-alpha-D-glucose. Residues His-150 and Gln-188 each coordinate kaempferol. Residues His-150 and Gln-188 each coordinate quercetin. UDP is bound by residues Thr-280, Ser-306, Trp-332, Ala-333, and His-350. Positions 280, 306, 332, 333, 350, 353, 354, 355, and 358 each coordinate UDP-alpha-D-glucose. The UDP site is built by Asn-354, Ser-355, and Glu-358. Gly-373 is a binding site for quercetin. Residues Asp-374 and Gln-375 each coordinate UDP-alpha-D-glucose.

This sequence belongs to the UDP-glycosyltransferase family. In terms of tissue distribution, detected only in berry skin.

The catalysed reaction is an anthocyanidin + UDP-alpha-D-glucose + H(+) = an anthocyanidin 3-O-beta-D-glucoside + UDP. It catalyses the reaction cyanidin + UDP-alpha-D-glucose = cyanidin 3-O-beta-D-glucoside + UDP + H(+). It carries out the reaction delphinidin + UDP-alpha-D-glucose = delphinidin 3-O-beta-D-glucoside + UDP. The enzyme catalyses peonidin + UDP-alpha-D-glucose = peonidin 3-O-beta-D-glucoside + UDP. The catalysed reaction is pelargonidin + UDP-alpha-D-glucose = pelargonidin 3-O-beta-D-glucoside + UDP. It catalyses the reaction malvidin + UDP-alpha-D-glucose = malvidin 3-O-beta-D-glucoside + UDP. It carries out the reaction a flavonol + UDP-alpha-D-glucose = a flavonol 3-O-beta-D-glucoside + UDP + H(+). The protein operates within pigment biosynthesis; anthocyanin biosynthesis. Inhibited by Mn(2+) and Zn(2+). In terms of biological role, in the presence of other necessary color factors, this glycosylation reaction allows the accumulation of anthocyanin pigments. Involved in the formation of red wine pigments. UDP-glucose (UDP-Glc) is the physiological sugar donor, and cyanidin is the natural acceptor in vivo. Can glucosylate the anthocyanidins delphinidin, peonidin, pelargonidin and malvidin. The flavonols quercitin and kaempferol can also be glucosylated in vitro, but with glucosylation rates 50-100 times lower than cyanidin. In vitro, can use UDP-Glc, UDP-5SGlc, UDP-Xyl, UDP-Man, UDP-Gal, UDP-GlcNAc, GDP-Glc, dTDP-Glc and dTDP-Xyl as sugar donors, but not UDP-6OMeGal, UDP-Ara, UDP-6FGal, UDP-GlcN, UDP-2FGal, UDP-5SAra, GDP-Man, GDP-Fuc, UDP-Fuc or UDP-Rha. The polypeptide is Anthocyanidin 3-O-glucosyltransferase UFGT (Vitis vinifera (Grape)).